A 643-amino-acid chain; its full sequence is 1-deoxy-D-xylulose-5-phosphate synthase (643 aa).

Residues histidine 78 and 119–121 contribute to the thiamine diphosphate site; that span reads AHS. Aspartate 150 provides a ligand contact to Mg(2+). Thiamine diphosphate is bound by residues 151-152, asparagine 179, tyrosine 288, and glutamate 370; that span reads GS. Residue asparagine 179 coordinates Mg(2+).

The protein belongs to the transketolase family. DXPS subfamily. In terms of assembly, homodimer. The cofactor is Mg(2+). Thiamine diphosphate is required as a cofactor.

It carries out the reaction D-glyceraldehyde 3-phosphate + pyruvate + H(+) = 1-deoxy-D-xylulose 5-phosphate + CO2. It functions in the pathway metabolic intermediate biosynthesis; 1-deoxy-D-xylulose 5-phosphate biosynthesis; 1-deoxy-D-xylulose 5-phosphate from D-glyceraldehyde 3-phosphate and pyruvate: step 1/1. In terms of biological role, catalyzes the acyloin condensation reaction between C atoms 2 and 3 of pyruvate and glyceraldehyde 3-phosphate to yield 1-deoxy-D-xylulose-5-phosphate (DXP). The protein is 1-deoxy-D-xylulose-5-phosphate synthase of Brucella canis (strain ATCC 23365 / NCTC 10854 / RM-666).